The primary structure comprises 267 residues: Shikimate dehydrogenase (NADP(+)) (267 aa).

Residues 14 to 16 and Thr-61 contribute to the shikimate site; that span reads SLS. Lys-65 acts as the Proton acceptor in catalysis. Shikimate-binding residues include Asn-86 and Asp-101. NADP(+) is bound by residues 126–130, 150–155, and Leu-213; these read GAGGA and NRTPFK. Residue Tyr-215 coordinates shikimate. An NADP(+)-binding site is contributed by Gly-236.

Belongs to the shikimate dehydrogenase family. In terms of assembly, homodimer.

It carries out the reaction shikimate + NADP(+) = 3-dehydroshikimate + NADPH + H(+). It participates in metabolic intermediate biosynthesis; chorismate biosynthesis; chorismate from D-erythrose 4-phosphate and phosphoenolpyruvate: step 4/7. Its function is as follows. Involved in the biosynthesis of the chorismate, which leads to the biosynthesis of aromatic amino acids. Catalyzes the reversible NADPH linked reduction of 3-dehydroshikimate (DHSA) to yield shikimate (SA). This chain is Shikimate dehydrogenase (NADP(+)), found in Ruthia magnifica subsp. Calyptogena magnifica.